A 352-amino-acid chain; its full sequence is Peptide chain release factor 1 (352 aa).

Position 230 is an N5-methylglutamine (Gln-230).

The protein belongs to the prokaryotic/mitochondrial release factor family. Post-translationally, methylated by PrmC. Methylation increases the termination efficiency of RF1.

It localises to the cytoplasm. Functionally, peptide chain release factor 1 directs the termination of translation in response to the peptide chain termination codons UAG and UAA. This chain is Peptide chain release factor 1, found in Exiguobacterium sibiricum (strain DSM 17290 / CCUG 55495 / CIP 109462 / JCM 13490 / 255-15).